The chain runs to 706 residues: Kinesin-like protein KIF2A (706 aa).

The segment at 1 to 217 (MATANFGKIQ…LDYRPLTTAD (217 aa)) is globular. A disordered region spans residues 66–139 (LVPDEEIEPS…AQQNGSVSDI (74 aa)). Ser-75 is subject to Phosphoserine. Phosphothreonine is present on residues Thr-78 and Thr-97. The residue at position 100 (Ser-100) is a Phosphoserine. At Lys-102 the chain carries N6-acetyllysine. The segment covering 123–139 (FPEQSSSAQQNGSVSDI) has biased composition (polar residues). 2 positions are modified to phosphoserine: Ser-135 and Ser-140. The tract at residues 165 to 186 (KLQEKREKRRLQQQELREKRAQ) is disordered. In terms of domain architecture, Kinesin motor spans 223-553 (RICVCVRKRP…LRYANRVKEL (331 aa)). 313-320 (GQTGSGKT) contributes to the ATP binding site. A phosphoserine mark is found at Asp-556 and Gln-573. The stretch at 660 to 699 (ATQLEAILEQKIDILTELRDKVKSFRAALQEEEQASKQIN) forms a coiled coil.

Belongs to the TRAFAC class myosin-kinesin ATPase superfamily. Kinesin family. MCAK/KIF2 subfamily. In terms of assembly, interacts with AURKA and PLK1. Interacts with PSRC1. Interacts with MCRS1; the interaction enhances recruitment of KIF2A to the minus ends of spindle microtubules which promotes chromosome alignment.

It is found in the cytoplasm. Its subcellular location is the cytoskeleton. The protein localises to the microtubule organizing center. It localises to the centrosome. The protein resides in the spindle pole. It is found in the spindle. Functionally, plus end-directed microtubule-dependent motor required for normal brain development. May regulate microtubule dynamics during axonal growth. Required for normal progression through mitosis. Required for normal congress of chromosomes at the metaphase plate. Required for normal spindle dynamics during mitosis. Promotes spindle turnover. Implicated in formation of bipolar mitotic spindles. Has microtubule depolymerization activity. The sequence is that of Kinesin-like protein KIF2A (KIF2A) from Homo sapiens (Human).